We begin with the raw amino-acid sequence, 174 residues long: Small ribosomal subunit protein uS4 (174 aa).

The region spanning 105 to 169 (RRLQTVAYRK…SPLADDLHPE (65 aa)) is the S4 RNA-binding domain.

The protein belongs to the universal ribosomal protein uS4 family. As to quaternary structure, part of the 30S ribosomal subunit. Contacts protein S5. The interaction surface between S4 and S5 is involved in control of translational fidelity.

Functionally, one of the primary rRNA binding proteins, it binds directly to 16S rRNA where it nucleates assembly of the body of the 30S subunit. Its function is as follows. With S5 and S12 plays an important role in translational accuracy. In Natronomonas pharaonis (strain ATCC 35678 / DSM 2160 / CIP 103997 / JCM 8858 / NBRC 14720 / NCIMB 2260 / Gabara) (Halobacterium pharaonis), this protein is Small ribosomal subunit protein uS4.